The sequence spans 157 residues: Putative 6-carboxy-5,6,7,8-tetrahydropterin synthase (157 aa).

His-21 lines the Zn(2+) pocket. Cys-31 acts as the Proton acceptor in catalysis. Zn(2+)-binding residues include His-35 and His-37. Catalysis depends on charge relay system residues His-70 and Glu-140.

It belongs to the PTPS family. QueD subfamily. Zn(2+) serves as cofactor.

It catalyses the reaction 7,8-dihydroneopterin 3'-triphosphate + H2O = 6-carboxy-5,6,7,8-tetrahydropterin + triphosphate + acetaldehyde + 2 H(+). The protein operates within purine metabolism; 7-cyano-7-deazaguanine biosynthesis. Catalyzes the conversion of 7,8-dihydroneopterin triphosphate (H2NTP) to 6-carboxy-5,6,7,8-tetrahydropterin (CPH4) and acetaldehyde. This is Putative 6-carboxy-5,6,7,8-tetrahydropterin synthase (queD) from Pyrococcus horikoshii (strain ATCC 700860 / DSM 12428 / JCM 9974 / NBRC 100139 / OT-3).